Here is a 941-residue protein sequence, read N- to C-terminus: Isoleucine--tRNA ligase (941 aa).

The 'HIGH' region signature appears at 58–68; that stretch reads PYANGNIHIGH. E564 contacts L-isoleucyl-5'-AMP. Residues 605 to 609 carry the 'KMSKS' region motif; that stretch reads KMSKS. An ATP-binding site is contributed by K608. Positions 904, 907, 924, and 927 each coordinate Zn(2+).

This sequence belongs to the class-I aminoacyl-tRNA synthetase family. IleS type 1 subfamily. In terms of assembly, monomer. Requires Zn(2+) as cofactor.

The protein resides in the cytoplasm. It carries out the reaction tRNA(Ile) + L-isoleucine + ATP = L-isoleucyl-tRNA(Ile) + AMP + diphosphate. Catalyzes the attachment of isoleucine to tRNA(Ile). As IleRS can inadvertently accommodate and process structurally similar amino acids such as valine, to avoid such errors it has two additional distinct tRNA(Ile)-dependent editing activities. One activity is designated as 'pretransfer' editing and involves the hydrolysis of activated Val-AMP. The other activity is designated 'posttransfer' editing and involves deacylation of mischarged Val-tRNA(Ile). The protein is Isoleucine--tRNA ligase of Buchnera aphidicola subsp. Cinara cedri (strain Cc).